Reading from the N-terminus, the 306-residue chain is uncharacterized protein (306 aa).

The segment at 40-156 (HETCSTPGED…AVASASAPTE (117 aa)) is disordered. Low complexity predominate over residues 64-73 (EGINLGEEGL). Basic residues predominate over residues 129-139 (KQHKKAKKRKS).

This is an uncharacterized protein from Rattus norvegicus (Rat).